A 28-amino-acid chain; its full sequence is Truncated protein OPG079 (28 aa).

Belongs to the orthopoxvirus OPG079 family. In terms of assembly, homoomultimer (Potential). Interacts with the small subunit of ribonucleotide reductase. Interacts with host FAM111A; this interaction protomtes OPG079 degradation through autophagy.

It localises to the host cytoplasm. Plays an essential role in viral DNA replication. Binds to ssDNA with high affinity and localizes to cytoplasmic factories where nascent viral genomes accumulate. May disrupt loops, hairpins and other secondary structures present on ssDNA to reduce and eliminate pausing of viral DNA polymerase at specific sites during elongation. The sequence is that of Truncated protein OPG079 (OPG079) from Vaccinia virus (strain L-IVP) (VACV).